The chain runs to 918 residues: NEDD4-like E3 ubiquitin-protein ligase WWP1 (918 aa).

Positions 1–116 (MATASPRSDT…THNRKLEKVK (116 aa)) constitute a C2 domain. Composition is skewed to polar residues over residues 150-164 (TNRS…QQNG), 209-219 (NGENTPSSPSQ), and 235-258 (SAPT…STMG). 2 disordered regions span residues 150–182 (TNRS…PRLP) and 209–360 (NGEN…PHGR). Residues 266–281 (TTSTSNCTSTTTQEPP) are compositionally biased toward low complexity. WW domains follow at residues 345-378 (EALP…RPQP), 377-410 (QPLP…RPTM), 452-485 (GPLP…DPRT), and 492-525 (EPLP…DPRN). The tract at residues 345–525 (EALPSGWEQR…RTTTFKDPRN (181 aa)) is interaction with ERBB4. Residues 345–527 (EALPSGWEQR…TTFKDPRNGK (183 aa)) are required for interaction with and ubiquitination of AMOTL2. Required for interaction with YAP1. The HECT domain maps to 584–918 (KPYDLRRRLY…IEETEGFGQE (335 aa)). The active-site Glycyl thioester intermediate is the Cys886.

In terms of assembly, interacts with the Crumbs complex components PALS1 and PATJ; interaction with the Crumbs complex is enhanced by WWP1's interaction with AMOTL2 and facilitates WWP1 localization to the plasma membrane. Interaction with the Crumbs complex promotes WWP1 monoubiquitination of AMOTL2, which activates the Hippo signaling pathway. Binds SCNN1A, SCNN1B, SCNN1G, WBP1, WBP2, DRPLA and adenovirus type 2 PIII. Interacts with TGIF. Binds KLF2 AND HIVEP3. Interacts with RNF11. Interacts with SPART. Interacts with NDFIP1 and NDFIP2; this interaction activates the E3 ubiquitin-protein ligase. Interacts with ERBB4 isoforms JM-B CYT-1 and JM-A CYT-1. Does not interact with ERB4 isoform JMA-A CYT-2. Interacts with SMAD1, SMAD2, SMAD3, SMAD5, SMAD6, SMAD7, TGFBR1 and TGFBR2. Associates with the TGFBR1:TGFBR2 receptor complex in presence of SMAD7. Interacts with SKIL isoform 1. Interacts with TP63 isoform 1 and isoform 2. Interacts (via WW domains) with ARRDC1, ARRDC2 and ARRDC3. In terms of processing, auto-ubiquitinated and ubiquitinated by RNF11.

Its subcellular location is the cytoplasm. It localises to the cell membrane. The protein resides in the nucleus. The protein localises to the cell junction. It catalyses the reaction S-ubiquitinyl-[E2 ubiquitin-conjugating enzyme]-L-cysteine + [acceptor protein]-L-lysine = [E2 ubiquitin-conjugating enzyme]-L-cysteine + N(6)-ubiquitinyl-[acceptor protein]-L-lysine.. It participates in protein modification; protein ubiquitination. Activated by NDFIP1- and NDFIP2-binding. In terms of biological role, E3 ubiquitin-protein ligase which accepts ubiquitin from an E2 ubiquitin-conjugating enzyme in the form of a thioester and then directly transfers the ubiquitin to targeted substrates. Ubiquitinates and promotes degradation of SMAD2 in response to TGF-beta signaling, which requires interaction with TGIF. Ubiquitinates ERBB4 isoforms JM-A CYT-1 and JM-B CYT-1, KLF2, KLF5 and TP63 and promotes their proteasomal degradation. Ubiquitinates RNF11 without targeting it for degradation. Ubiquitinates and promotes degradation of TGFBR1; the ubiquitination is enhanced by SMAD7. Ubiquitinates SMAD6 and SMAD7. Activates the Hippo signaling pathway in response to cell contact inhibition and recruitment to the Crumbs complex at the cell membrane. Monoubiquitinates AMOTL2 which facilitates its interaction with and activation of LATS2. LATS2 then phosphorylates YAP1, excluding it from the nucleus and therefore ultimately represses YAP1-driven transcription of target genes. This is NEDD4-like E3 ubiquitin-protein ligase WWP1 (Wwp1) from Mus musculus (Mouse).